A 122-amino-acid polypeptide reads, in one-letter code: Holo-[acyl-carrier-protein] synthase (122 aa).

Positions 5 and 54 each coordinate Mg(2+).

This sequence belongs to the P-Pant transferase superfamily. AcpS family. Requires Mg(2+) as cofactor.

Its subcellular location is the cytoplasm. It catalyses the reaction apo-[ACP] + CoA = holo-[ACP] + adenosine 3',5'-bisphosphate + H(+). Its function is as follows. Transfers the 4'-phosphopantetheine moiety from coenzyme A to a Ser of acyl-carrier-protein. The polypeptide is Holo-[acyl-carrier-protein] synthase (Aquifex aeolicus (strain VF5)).